The chain runs to 258 residues: Small ribosomal subunit protein uS15m (258 aa).

A mitochondrion-targeting transit peptide spans 1 to 57; it reads MLRAAWRALSSVRAQAVTRAPVPALRGGSSASLLSARCGLQPPSLLRAARAYAAVQK. The segment at 229–258 is disordered; the sequence is KAAAAAAKKEKNEGVPENPSNAVPEKTQVN.

The protein belongs to the universal ribosomal protein uS15 family. Component of the mitochondrial ribosome small subunit (28S) which comprises a 12S rRNA and about 30 distinct proteins. Interacts with METTL17.

Its subcellular location is the mitochondrion matrix. The sequence is that of Small ribosomal subunit protein uS15m (Mrps15) from Mus musculus (Mouse).